The following is a 315-amino-acid chain: 4-diphosphocytidyl-2-C-methyl-D-erythritol kinase (315 aa).

Lys-11 is a catalytic residue. 99–109 (PMAAGLAGGSA) is an ATP binding site. Asp-141 is an active-site residue.

It belongs to the GHMP kinase family. IspE subfamily.

The enzyme catalyses 4-CDP-2-C-methyl-D-erythritol + ATP = 4-CDP-2-C-methyl-D-erythritol 2-phosphate + ADP + H(+). Its pathway is isoprenoid biosynthesis; isopentenyl diphosphate biosynthesis via DXP pathway; isopentenyl diphosphate from 1-deoxy-D-xylulose 5-phosphate: step 3/6. Catalyzes the phosphorylation of the position 2 hydroxy group of 4-diphosphocytidyl-2C-methyl-D-erythritol. In Synechocystis sp. (strain ATCC 27184 / PCC 6803 / Kazusa), this protein is 4-diphosphocytidyl-2-C-methyl-D-erythritol kinase.